Consider the following 69-residue polypeptide: uncharacterized protein (69 aa).

Topologically, residues 1–15 (MLLYIVIIVACIISK) are cytoplasmic. The helical transmembrane segment at 16 to 36 (LVPNEYWAIHLFFIIMIFMVY) threads the bilayer. Topologically, residues 37 to 69 (MYEKLDIHQKYQFWNYTMSGLSGHNVQVICKCY) are extracellular. A glycan (N-linked (GlcNAc...) asparagine; by host) is linked at Asn-51.

Belongs to the asfivirus X69R family.

It localises to the host membrane. This is an uncharacterized protein from Ornithodoros (relapsing fever ticks).